The following is a 162-amino-acid chain: UPF0262 protein Pden_1958 (162 aa).

The interval 1–22 is disordered; the sequence is MSQSANRLCRIDIDDSALPPPS.

The protein belongs to the UPF0262 family.

This Paracoccus denitrificans (strain Pd 1222) protein is UPF0262 protein Pden_1958.